The following is a 683-amino-acid chain: Elongation factor G-like protein (683 aa).

Positions 5 to 267 constitute a tr-type G domain; it reads QNVRSAALIG…YLGDIGVSPE (263 aa). Residues 14 to 21, 73 to 77, and 127 to 130 contribute to the GTP site; these read GHNGSGKS, DTPGF, and NQMD.

The protein belongs to the TRAFAC class translation factor GTPase superfamily. Classic translation factor GTPase family. EF-G/EF-2 subfamily.

This Thermotoga maritima (strain ATCC 43589 / DSM 3109 / JCM 10099 / NBRC 100826 / MSB8) protein is Elongation factor G-like protein.